We begin with the raw amino-acid sequence, 986 residues long: Leucine-rich repeat receptor-like kinase protein HAR1 (986 aa).

An N-terminal signal peptide occupies residues 1 to 25 (MRIRVSYLLVLCFTLIWFRWTVVYS). LRR repeat units lie at residues 71 to 97 (DQNL…IGLL), 98 to 121 (EKLE…LASL), 123 to 145 (SLKV…ITVG), 146 to 170 (MTEL…IVKL), 171 to 196 (EKLK…EFQS), 198 to 218 (EFLG…LAKL), 243 to 267 (MENL…LGNL), 268 to 291 (TKLH…LSSM), 293 to 314 (SLMS…SFSK), 316 to 339 (KNLT…IGDL), 340 to 363 (PNLE…LGGN), 365 to 387 (RFLY…LCKS), 388 to 411 (GRLK…IGEC), 412 to 435 (RSLT…VFQL), 437 to 458 (SVTI…VISG), 459 to 482 (ESLG…MKNL), 483 to 506 (RALQ…VFEI), 508 to 530 (MLTK…ITHR), 531 to 554 (ASLT…MKNL), 555 to 578 (MDLS…IRFM), and 579 to 603 (TSLT…QFLV). N-linked (GlcNAc...) asparagine glycans are attached at residues asparagine 80, asparagine 102, asparagine 109, asparagine 128, and asparagine 141. Residues asparagine 255, asparagine 266, and asparagine 279 are each glycosylated (N-linked (GlcNAc...) asparagine). 2 N-linked (GlcNAc...) asparagine glycosylation sites follow: asparagine 317 and asparagine 351. Residues asparagine 513 and asparagine 518 are each glycosylated (N-linked (GlcNAc...) asparagine). Residues asparagine 561 and asparagine 590 are each glycosylated (N-linked (GlcNAc...) asparagine). Residues 645-665 (IVIGIALATAVLLVAVTVHVV) form a helical membrane-spanning segment. Residues 695 to 971 (LKEENIIGKG…TMREVVHMLT (277 aa)) enclose the Protein kinase domain. ATP is bound by residues 701-709 (IGKGGAGIV) and lysine 723. The Proton acceptor role is filled by aspartate 820.

It belongs to the protein kinase superfamily. Ser/Thr protein kinase family. Expressed in roots, leaves, stems and flowers.

Its subcellular location is the cell membrane. It carries out the reaction L-seryl-[protein] + ATP = O-phospho-L-seryl-[protein] + ADP + H(+). The enzyme catalyses L-threonyl-[protein] + ATP = O-phospho-L-threonyl-[protein] + ADP + H(+). LRR receptor kinase involved in the regulation of root and shoot growth, and root nodule organogenesis. Involved in long distance nodulation signaling events. Involved in the autoregulation of nodulation (AON), a long distance systemic signaling from root to shoot and back again, which allows legumes to limit the number of root nodules formed based on available nitrogen and previous rhizobial colonization. Acts from shoot to root to control AON. Involved in the regulation of root colonization by arbuscular mycorrhizal (AM) fungi. This is Leucine-rich repeat receptor-like kinase protein HAR1 from Lotus japonicus (Lotus corniculatus var. japonicus).